The primary structure comprises 512 residues: Alpha-1B-glycoprotein (512 aa).

The signal sequence occupies residues 1 to 18; that stretch reads MSLLATVLLLWGFTLGPG. Ig-like V-type domains follow at residues 22 to 126, 127 to 219, 220 to 312, 313 to 415, and 416 to 512; these read MLDS…VTGK, EPLP…MYAS, QAPP…PVEL, MWSD…LRVN, and GPPP…IVEG. N-linked (GlcNAc...) asparagine glycans are attached at residues Asn44, Asn89, and Asn192. 5 disulfide bridges follow: Cys49–Cys96, Cys153–Cys195, Cys245–Cys292, Cys343–Cys392, and Cys441–Cys488. Asn369, Asn381, Asn389, and Asn485 each carry an N-linked (GlcNAc...) asparagine glycan.

In terms of assembly, interacts with CRISP3. Expressed in the liver hepatocytes of male and female GH transgenic mice and in the liver of female, but not of male, non-transgenic mice.

It is found in the secreted. This is Alpha-1B-glycoprotein (A1bg) from Mus musculus (Mouse).